The primary structure comprises 168 residues: MEPPSRHAGTDIIIEDARWRASVPGTERAIRRALVAVARQGGPDFTQSPAPSILLATDRIVKRLNARFRDKNKPTNVLTFEPLSPMHGGDIVLGYETVRREAAAARRSLRAHLSHLVVHGALHLAGYDHHHPGEAREMEGIETRTLRSLGFGDPWRQGNWQQAGSVRI.

Residues His-119, His-123, and His-129 each contribute to the Zn(2+) site.

This sequence belongs to the endoribonuclease YbeY family. Requires Zn(2+) as cofactor.

The protein resides in the cytoplasm. Functionally, single strand-specific metallo-endoribonuclease involved in late-stage 70S ribosome quality control and in maturation of the 3' terminus of the 16S rRNA. The polypeptide is Endoribonuclease YbeY (Gluconobacter oxydans (strain 621H) (Gluconobacter suboxydans)).